We begin with the raw amino-acid sequence, 332 residues long: Ribosomal RNA small subunit methyltransferase H (332 aa).

S-adenosyl-L-methionine is bound by residues 36-38 (GGY), Asp54, Phe81, Asp102, and Gln109. The disordered stretch occupies residues 295 to 322 (PRARSAKLRGAERTESPAHAAGDLPGWP).

It belongs to the methyltransferase superfamily. RsmH family.

It localises to the cytoplasm. It carries out the reaction cytidine(1402) in 16S rRNA + S-adenosyl-L-methionine = N(4)-methylcytidine(1402) in 16S rRNA + S-adenosyl-L-homocysteine + H(+). In terms of biological role, specifically methylates the N4 position of cytidine in position 1402 (C1402) of 16S rRNA. This is Ribosomal RNA small subunit methyltransferase H from Rhodopseudomonas palustris (strain ATCC BAA-98 / CGA009).